Reading from the N-terminus, the 297-residue chain is ATP synthase gamma chain (297 aa).

The protein belongs to the ATPase gamma chain family. In terms of assembly, F-type ATPases have 2 components, CF(1) - the catalytic core - and CF(0) - the membrane proton channel. CF(1) has five subunits: alpha(3), beta(3), gamma(1), delta(1), epsilon(1). CF(0) has three main subunits: a, b and c.

The protein localises to the cell membrane. Its function is as follows. Produces ATP from ADP in the presence of a proton gradient across the membrane. The gamma chain is believed to be important in regulating ATPase activity and the flow of protons through the CF(0) complex. This chain is ATP synthase gamma chain, found in Micrococcus luteus (strain ATCC 4698 / DSM 20030 / JCM 1464 / CCM 169 / CCUG 5858 / IAM 1056 / NBRC 3333 / NCIMB 9278 / NCTC 2665 / VKM Ac-2230) (Micrococcus lysodeikticus).